Reading from the N-terminus, the 125-residue chain is Snaclec coagulation factor IX/factor X-binding protein subunit B (125 aa).

Residues 1-122 (DCSSGWTAYG…SLFGHFVCKS (122 aa)) enclose the C-type lectin domain. 3 disulfides stabilise this stretch: Cys2/Cys13, Cys30/Cys120, and Cys97/Cys112. Residues Ser41 and Glu47 each contribute to the Ca(2+) site.

The protein belongs to the snaclec family. Heterodimer of subunits A and B; disulfide-linked. In terms of tissue distribution, expressed by the venom gland.

The protein localises to the secreted. Its function is as follows. Anticoagulant protein which binds to coagulation factor IX (F9) and coagulation factor X (F10) in the presence of calcium. It may bind the gamma-carboxyglutamic acid-domain regions of factors with a 1 to 1 stoichiometry. The dissociation constant (K(d)) are 6.6 nM for factor IX (F9) and 125 nM for factor X (F10). Does not bind carbohydrates. In Echis carinatus (Saw-scaled viper), this protein is Snaclec coagulation factor IX/factor X-binding protein subunit B.